A 559-amino-acid chain; its full sequence is Inositol-3-phosphate synthase 1 (559 aa).

NAD(+) is bound by residues G67, G68, N69, N70, D141, S177, V178, Q188, R191, T228, A229, N230, T231, G278, S279, D303, S306, N337, N338, D339, and K352. Residue S279 is modified to Phosphoserine. A Phosphoserine modification is found at S357. 4 residues coordinate NAD(+): G390, D391, D419, and S420.

The protein belongs to the myo-inositol 1-phosphate synthase family. Requires NAD(+) as cofactor.

The protein localises to the cytoplasm. The enzyme catalyses D-glucose 6-phosphate = 1D-myo-inositol 3-phosphate. It participates in polyol metabolism; myo-inositol biosynthesis; myo-inositol from D-glucose 6-phosphate: step 1/2. Its function is as follows. Key enzyme in myo-inositol biosynthesis pathway that catalyzes the conversion of glucose 6-phosphate to 1-myo-inositol 1-phosphate in a NAD-dependent manner. Rate-limiting enzyme in the synthesis of all inositol-containing compounds. The chain is Inositol-3-phosphate synthase 1 (ISYNA1) from Macaca fascicularis (Crab-eating macaque).